The chain runs to 248 residues: 2,3-bisphosphoglycerate-dependent phosphoglycerate mutase (248 aa).

Residues 8–15 (RHGESEWN), 21–22 (TG), Arg60, 87–90 (ERHY), Lys98, 114–115 (RR), and 183–184 (GN) each bind substrate. Catalysis depends on His9, which acts as the Tele-phosphohistidine intermediate. Catalysis depends on Glu87, which acts as the Proton donor/acceptor.

Belongs to the phosphoglycerate mutase family. BPG-dependent PGAM subfamily.

It catalyses the reaction (2R)-2-phosphoglycerate = (2R)-3-phosphoglycerate. The protein operates within carbohydrate degradation; glycolysis; pyruvate from D-glyceraldehyde 3-phosphate: step 3/5. Its function is as follows. Catalyzes the interconversion of 2-phosphoglycerate and 3-phosphoglycerate. This Borrelia garinii subsp. bavariensis (strain ATCC BAA-2496 / DSM 23469 / PBi) (Borreliella bavariensis) protein is 2,3-bisphosphoglycerate-dependent phosphoglycerate mutase.